The primary structure comprises 53 residues: Non-classical export protein 1 (53 aa).

A helical transmembrane segment spans residues 7 to 29 (FLLGKFSDPLLAIMVGCLSYYVY).

The protein belongs to the NCE101 family.

It localises to the membrane. In terms of biological role, involved in a novel pathway of export of proteins that lack a cleavable signal sequence. May be part of the export machinery or may also be a substrate for non-classical export. This Saccharomyces cerevisiae (strain ATCC 204508 / S288c) (Baker's yeast) protein is Non-classical export protein 1 (NCE101).